The following is a 646-amino-acid chain: Phosphomethylpyrimidine synthase (646 aa).

Substrate is bound by residues Asn235, Met264, Tyr293, His329, 349–351, 390–393, and Glu429; these read SRG and DGLR. His433 is a Zn(2+) binding site. A substrate-binding site is contributed by Tyr456. Zn(2+) is bound at residue His497. 3 residues coordinate [4Fe-4S] cluster: Cys577, Cys580, and Cys585.

The protein belongs to the ThiC family. Homodimer. [4Fe-4S] cluster is required as a cofactor.

The catalysed reaction is 5-amino-1-(5-phospho-beta-D-ribosyl)imidazole + S-adenosyl-L-methionine = 4-amino-2-methyl-5-(phosphooxymethyl)pyrimidine + CO + 5'-deoxyadenosine + formate + L-methionine + 3 H(+). Its pathway is cofactor biosynthesis; thiamine diphosphate biosynthesis. Its function is as follows. Catalyzes the synthesis of the hydroxymethylpyrimidine phosphate (HMP-P) moiety of thiamine from aminoimidazole ribotide (AIR) in a radical S-adenosyl-L-methionine (SAM)-dependent reaction. This Vibrio campbellii (strain ATCC BAA-1116) protein is Phosphomethylpyrimidine synthase.